A 149-amino-acid chain; its full sequence is Thioredoxin-like protein 4B (149 aa).

The protein belongs to the DIM1 family. In terms of assembly, homodimer. Interacts with the U5-102 kDa protein subunit of the spliceosome.

The protein localises to the nucleus. Its function is as follows. Essential role in pre-mRNA splicing. Required in cell cycle progression for S/G(2) transition. This chain is Thioredoxin-like protein 4B (Txnl4b), found in Mus musculus (Mouse).